We begin with the raw amino-acid sequence, 798 residues long: Protocadherin beta-14 (798 aa).

The N-terminal stretch at 1-26 is a signal peptide; sequence MEIRGALDLRKRQVLIFLVLLGLSRA. The Extracellular segment spans residues 27 to 686; it reads GTESAHYSVA…APAQAQADSL (660 aa). 5 Cadherin domains span residues 35–133, 138–242, 247–347, 352–451, and 456–561; these read VAEE…SPTF, ILIK…APEF, YEVQ…PPEV, ITKR…APAF, and YTLF…SPFV. A disulfide bond links C96 and C102. N-linked (GlcNAc...) asparagine glycosylation is present at N169. N-linked (GlcNAc...) asparagine glycosylation is found at N359, N418, and N436. N567 carries an N-linked (GlcNAc...) asparagine glycan. The Cadherin 6 domain occupies 568 to 671; it reads GSAPCTELVP…LVDGFSQPYL (104 aa). The chain crosses the membrane as a helical span at residues 687–711; that stretch reads TVYLVVALASVSSLFLFSVLLFVAV. Over 712 to 798 the chain is Cytoplasmic; sequence RLCRRSRAAS…FRNSFGLNIQ (87 aa).

The protein resides in the cell membrane. In terms of biological role, potential calcium-dependent cell-adhesion protein. May be involved in the establishment and maintenance of specific neuronal connections in the brain. The polypeptide is Protocadherin beta-14 (PCDHB14) (Pan troglodytes (Chimpanzee)).